We begin with the raw amino-acid sequence, 294 residues long: Phosphatidylserine decarboxylase proenzyme (294 aa).

Catalysis depends on charge relay system; for autoendoproteolytic cleavage activity residues aspartate 88, histidine 145, and serine 248. Serine 248 functions as the Schiff-base intermediate with substrate; via pyruvic acid; for decarboxylase activity in the catalytic mechanism. Pyruvic acid (Ser); by autocatalysis is present on serine 248.

This sequence belongs to the phosphatidylserine decarboxylase family. PSD-B subfamily. Prokaryotic type I sub-subfamily. In terms of assembly, heterodimer of a large membrane-associated beta subunit and a small pyruvoyl-containing alpha subunit. Pyruvate serves as cofactor. Is synthesized initially as an inactive proenzyme. Formation of the active enzyme involves a self-maturation process in which the active site pyruvoyl group is generated from an internal serine residue via an autocatalytic post-translational modification. Two non-identical subunits are generated from the proenzyme in this reaction, and the pyruvate is formed at the N-terminus of the alpha chain, which is derived from the carboxyl end of the proenzyme. The autoendoproteolytic cleavage occurs by a canonical serine protease mechanism, in which the side chain hydroxyl group of the serine supplies its oxygen atom to form the C-terminus of the beta chain, while the remainder of the serine residue undergoes an oxidative deamination to produce ammonia and the pyruvoyl prosthetic group on the alpha chain. During this reaction, the Ser that is part of the protease active site of the proenzyme becomes the pyruvoyl prosthetic group, which constitutes an essential element of the active site of the mature decarboxylase.

The protein localises to the cell membrane. The catalysed reaction is a 1,2-diacyl-sn-glycero-3-phospho-L-serine + H(+) = a 1,2-diacyl-sn-glycero-3-phosphoethanolamine + CO2. Its pathway is phospholipid metabolism; phosphatidylethanolamine biosynthesis; phosphatidylethanolamine from CDP-diacylglycerol: step 2/2. Its function is as follows. Catalyzes the formation of phosphatidylethanolamine (PtdEtn) from phosphatidylserine (PtdSer). This chain is Phosphatidylserine decarboxylase proenzyme, found in Herminiimonas arsenicoxydans.